The sequence spans 165 residues: MNSLRIARAALRVRPTAVRAPLQRRGYAEAVADKIKLSLSLPHQAIYKSQDVVQVNIPAVSGEMGVLANHVPSIEQLKPGLVEVIEESGSNKQYFLSGGFAVVQPGSKLSINAVEGYALEDFSAEAVRAQIAEAQKIVSGGGSQQDIAEAQVELEVLESLQAVLK.

The transit peptide at methionine 1–tyrosine 27 directs the protein to the mitochondrion.

The protein belongs to the ATPase epsilon chain family. In terms of assembly, F-type ATPases have 2 components, CF(1) - the catalytic core - and CF(0) - the membrane proton channel. CF(1) has five subunits: alpha(3), beta(3), gamma(1), delta(1), epsilon(1). CF(0) has three main subunits: a, b and c.

It localises to the mitochondrion. The protein resides in the mitochondrion inner membrane. In terms of biological role, mitochondrial membrane ATP synthase (F(1)F(0) ATP synthase or Complex V) produces ATP from ADP in the presence of a proton gradient across the membrane which is generated by electron transport complexes of the respiratory chain. F-type ATPases consist of two structural domains, F(1) - containing the extramembraneous catalytic core, and F(0) - containing the membrane proton channel, linked together by a central stalk and a peripheral stalk. During catalysis, ATP turnover in the catalytic domain of F(1) is coupled via a rotary mechanism of the central stalk subunits to proton translocation. Part of the complex F(1) domain and of the central stalk which is part of the complex rotary element. Rotation of the central stalk against the surrounding alpha(3)beta(3) subunits leads to hydrolysis of ATP in three separate catalytic sites on the beta subunits. This is ATP synthase subunit delta, mitochondrial (des) from Neurospora crassa (strain ATCC 24698 / 74-OR23-1A / CBS 708.71 / DSM 1257 / FGSC 987).